Here is a 360-residue protein sequence, read N- to C-terminus: Peptide chain release factor 1 (360 aa).

At Gln-234 the chain carries N5-methylglutamine.

This sequence belongs to the prokaryotic/mitochondrial release factor family. Methylated by PrmC. Methylation increases the termination efficiency of RF1.

The protein localises to the cytoplasm. In terms of biological role, peptide chain release factor 1 directs the termination of translation in response to the peptide chain termination codons UAG and UAA. This Clostridium botulinum (strain Alaska E43 / Type E3) protein is Peptide chain release factor 1.